The sequence spans 198 residues: Ribosome maturation factor RimP (198 aa).

This sequence belongs to the RimP family.

The protein resides in the cytoplasm. Functionally, required for maturation of 30S ribosomal subunits. The sequence is that of Ribosome maturation factor RimP from Rhizobium etli (strain ATCC 51251 / DSM 11541 / JCM 21823 / NBRC 15573 / CFN 42).